A 238-amino-acid polypeptide reads, in one-letter code: Large ribosomal subunit protein bL25 (238 aa).

Over residues 1-10 (MATTVKELKA) the composition is skewed to basic and acidic residues. Residues 1–24 (MATTVKELKATARPKSGKGAARAE) are disordered.

The protein belongs to the bacterial ribosomal protein bL25 family. CTC subfamily. Part of the 50S ribosomal subunit; part of the 5S rRNA/L5/L18/L25 subcomplex. Contacts the 5S rRNA. Binds to the 5S rRNA independently of L5 and L18.

In terms of biological role, this is one of the proteins that binds to the 5S RNA in the ribosome where it forms part of the central protuberance. This chain is Large ribosomal subunit protein bL25, found in Bradyrhizobium diazoefficiens (strain JCM 10833 / BCRC 13528 / IAM 13628 / NBRC 14792 / USDA 110).